Here is a 423-residue protein sequence, read N- to C-terminus: Serine--tRNA ligase (423 aa).

Composition is skewed to basic and acidic residues over residues 1-24 (MIDL…RGED) and 62-71 (KMRDASPEEK). Residues 1-71 (MIDLKQLRDD…KMRDASPEEK (71 aa)) are disordered. 230-232 (TSE) is an L-serine binding site. ATP-binding positions include 261 to 263 (RRE) and V277. E284 is an L-serine binding site. 348–351 (ELTS) is an ATP binding site. Residue T383 participates in L-serine binding.

This sequence belongs to the class-II aminoacyl-tRNA synthetase family. Type-1 seryl-tRNA synthetase subfamily. As to quaternary structure, homodimer. The tRNA molecule binds across the dimer.

The protein resides in the cytoplasm. It carries out the reaction tRNA(Ser) + L-serine + ATP = L-seryl-tRNA(Ser) + AMP + diphosphate + H(+). It catalyses the reaction tRNA(Sec) + L-serine + ATP = L-seryl-tRNA(Sec) + AMP + diphosphate + H(+). The protein operates within aminoacyl-tRNA biosynthesis; selenocysteinyl-tRNA(Sec) biosynthesis; L-seryl-tRNA(Sec) from L-serine and tRNA(Sec): step 1/1. Catalyzes the attachment of serine to tRNA(Ser). Is also able to aminoacylate tRNA(Sec) with serine, to form the misacylated tRNA L-seryl-tRNA(Sec), which will be further converted into selenocysteinyl-tRNA(Sec). The chain is Serine--tRNA ligase from Corynebacterium kroppenstedtii (strain DSM 44385 / JCM 11950 / CIP 105744 / CCUG 35717).